A 679-amino-acid chain; its full sequence is Membrane-spanning 4-domains subfamily A member 14 (679 aa).

The next 4 helical transmembrane spans lie at 50–70 (ILLALIIVGFGTIFALNYIGF), 76–96 (LVVLTGYPFWGALIFILTGYL), 110–130 (VTGMNVISSLVAITGITFTIL), and 141–161 (MPSFEEICVFSRTLFIVLFFL). 4 disordered regions span residues 218-259 (VSQP…EKKP), 331-363 (SEQTMPSKSTSSHVKQSSNLTANDLPPQGILSQ), 469-491 (KEWKSEEELHRRKSSRRHSLNQQ), and 505-633 (VQAK…QAQV). A compositionally biased stretch (basic and acidic residues) spans 224–234 (KGREFVPDEQK). Residues 337 to 348 (SKSTSSHVKQSS) show a composition bias toward low complexity. A compositionally biased stretch (basic and acidic residues) spans 469 to 478 (KEWKSEEELH). Polar residues-rich tracts occupy residues 519 to 535 (DQQSKGWQSPKQKSLDQ) and 550 to 563 (KQAQLNQTKEQLPD). Positions 580 to 601 (QSKDGQVKDQQTDKEQNSKKQT) are enriched in basic and acidic residues. Residues 619–632 (GQFQNVQAEGQQAQ) are compositionally biased toward polar residues.

It belongs to the MS4A family.

The protein localises to the membrane. In terms of biological role, may be involved in signal transduction as a component of a multimeric receptor complex. This chain is Membrane-spanning 4-domains subfamily A member 14 (MS4A14), found in Homo sapiens (Human).